The primary structure comprises 105 residues: Large ribosomal subunit protein uL24 (105 aa).

The protein belongs to the universal ribosomal protein uL24 family. Part of the 50S ribosomal subunit.

Functionally, one of two assembly initiator proteins, it binds directly to the 5'-end of the 23S rRNA, where it nucleates assembly of the 50S subunit. One of the proteins that surrounds the polypeptide exit tunnel on the outside of the subunit. In Thermotoga maritima (strain ATCC 43589 / DSM 3109 / JCM 10099 / NBRC 100826 / MSB8), this protein is Large ribosomal subunit protein uL24.